A 438-amino-acid polypeptide reads, in one-letter code: Trigger factor (438 aa).

The PPIase FKBP-type domain occupies 163 to 249; the sequence is EDFVLIDYEG…LKEIRKQILP (87 aa).

The protein belongs to the FKBP-type PPIase family. Tig subfamily.

The protein localises to the cytoplasm. The catalysed reaction is [protein]-peptidylproline (omega=180) = [protein]-peptidylproline (omega=0). Functionally, involved in protein export. Acts as a chaperone by maintaining the newly synthesized protein in an open conformation. Functions as a peptidyl-prolyl cis-trans isomerase. The chain is Trigger factor from Desulfatibacillum aliphaticivorans.